The following is a 525-amino-acid chain: Peptide chain release factor 3 (525 aa).

Residues 9–276 form the tr-type G domain; that stretch reads AKRRTFAIIS…GFTRYAPAPQ (268 aa). Residues 18–25, 86–90, and 140–143 contribute to the GTP site; these read SHPDAGKT, DTPGH, and NKFD.

This sequence belongs to the TRAFAC class translation factor GTPase superfamily. Classic translation factor GTPase family. PrfC subfamily.

The protein resides in the cytoplasm. In terms of biological role, increases the formation of ribosomal termination complexes and stimulates activities of RF-1 and RF-2. It binds guanine nucleotides and has strong preference for UGA stop codons. It may interact directly with the ribosome. The stimulation of RF-1 and RF-2 is significantly reduced by GTP and GDP, but not by GMP. The polypeptide is Peptide chain release factor 3 (Francisella tularensis subsp. novicida (strain U112)).